We begin with the raw amino-acid sequence, 328 residues long: Phenylalanine--tRNA ligase alpha subunit (328 aa).

Glutamate 253 lines the Mg(2+) pocket.

This sequence belongs to the class-II aminoacyl-tRNA synthetase family. Phe-tRNA synthetase alpha subunit type 1 subfamily. Tetramer of two alpha and two beta subunits. Requires Mg(2+) as cofactor.

The protein localises to the cytoplasm. The catalysed reaction is tRNA(Phe) + L-phenylalanine + ATP = L-phenylalanyl-tRNA(Phe) + AMP + diphosphate + H(+). The chain is Phenylalanine--tRNA ligase alpha subunit from Actinobacillus pleuropneumoniae serotype 7 (strain AP76).